The primary structure comprises 306 residues: Glutathione transport system permease protein GsiC (306 aa).

Over 1 to 8 the chain is Cytoplasmic; it reads MLNYVIKR. A helical membrane pass occupies residues 9–29; that stretch reads LLGLIPTLFIVSVLVFLFVHM. The Periplasmic segment spans residues 30–102; that stretch reads LPGDPARLIA…SRFMPTLWLT (73 aa). The 198-residue stretch at 95 to 292 folds into the ABC transmembrane type-1 domain; it reads FMPTLWLTIT…LEFILINLVV (198 aa). The helical transmembrane segment at 103–123 threads the bilayer; it reads ITSMVWAVIFGMAAGIIAAVW. The Cytoplasmic portion of the chain corresponds to 124-134; that stretch reads RNRWPDRLSMT. Residues 135–155 form a helical membrane-spanning segment; it reads IAVSGISFPAFALGMLLIQVF. Residues 156 to 168 are Periplasmic-facing; the sequence is SVELGWLPTVGAD. The chain crosses the membrane as a helical span at residues 169 to 189; it reads SWQHYILSSLTLGAAVAAVMA. The Cytoplasmic portion of the chain corresponds to 190 to 228; the sequence is RFTRASFVDVLSEDYMRTARAKGVSETWVVLKHGLRNAM. The helical transmembrane segment at 229–249 threads the bilayer; it reads IPVVTMMGLQFGFLLGGSIVV. The Periplasmic portion of the chain corresponds to 250 to 277; it reads EKVFNWPGLGRLLVDSVEMRDYPVIQAE. A helical transmembrane segment spans residues 278–298; it reads ILLFSLEFILINLVVDVLYAA. Residues 299–306 lie on the Cytoplasmic side of the membrane; it reads INPAIRYK.

Belongs to the binding-protein-dependent transport system permease family. The complex is composed of two ATP-binding proteins (GsiA), two transmembrane proteins (GsiC and GsiD) and a solute-binding protein (GsiB).

The protein resides in the cell inner membrane. In terms of biological role, part of the ABC transporter complex GsiABCD involved in glutathione import. Probably responsible for the translocation of the substrate across the membrane. The chain is Glutathione transport system permease protein GsiC from Shigella boydii serotype 4 (strain Sb227).